Here is a 262-residue protein sequence, read N- to C-terminus: WW domain-binding protein 2 (262 aa).

Residues 1–84 (MALNKNHSEG…YLMKDCEVKQ (84 aa)) enclose the GRAM domain. Tyr192 is modified (phosphotyrosine). The PPxY motif 1 motif lies at 196–200 (PPPPY). Residues 197 to 206 (PPPYPGPMEP) show a composition bias toward pro residues. The segment at 197-262 (PPPYPGPMEP…YYPPEDKKTQ (66 aa)) is disordered. Low complexity predominate over residues 219-231 (AAEAKAAEAAASA). Tyr232 is modified (phosphotyrosine). Residues 246-255 (SQPPPPPYYP) are compositionally biased toward pro residues. A PPxY motif 2 motif is present at residues 249-253 (PPPPY).

In terms of assembly, binds to the WW domain of YAP1, WWP1 and WWP2. Interacts with NEDD4. Interacts with ESR1 and UBE3A. In terms of processing, phosphorylated in repsonse to EGF as well as estrogen and progesterone hormones. Tyr-192 and Tyr-232 are phosphorylated by YES and SRC inducing nuclear translocation.

The protein localises to the cytoplasm. It localises to the nucleus. In terms of biological role, acts as a transcriptional coactivator of estrogen and progesterone receptors (ESR1 and PGR) upon hormone activation. In presence of estrogen, binds to ESR1-responsive promoters. Synergizes with YAP1 to enhance PGR activity. Modulates expression of post-synaptic scaffolding proteins via regulation of ESR1, ESR2 and PGR. The protein is WW domain-binding protein 2 (Wbp2) of Rattus norvegicus (Rat).